The sequence spans 629 residues: tRNA uridine 5-carboxymethylaminomethyl modification enzyme MnmG (629 aa).

11 to 16 (GGGHAG) is a binding site for FAD. NAD(+) is bound at residue 273 to 287 (GPRYCPSFEDKAVRF).

This sequence belongs to the MnmG family. Homodimer. Heterotetramer of two MnmE and two MnmG subunits. Requires FAD as cofactor.

It is found in the cytoplasm. In terms of biological role, NAD-binding protein involved in the addition of a carboxymethylaminomethyl (cmnm) group at the wobble position (U34) of certain tRNAs, forming tRNA-cmnm(5)s(2)U34. The polypeptide is tRNA uridine 5-carboxymethylaminomethyl modification enzyme MnmG (Mycoplasma mycoides subsp. mycoides SC (strain CCUG 32753 / NCTC 10114 / PG1)).